The sequence spans 426 residues: DNA primase DnaG (426 aa).

The region spanning 165-241 is the Toprim domain; it reads DEIIIVEGRA…DIDYVAKAPP (77 aa). Residues Glu-171, Asp-215, and Asp-217 each coordinate Mg(2+). Positions 278–298 are disordered; the sequence is PAVEERPQPPQPQPPAVQPVQ. The span at 285-294 shows a compositional bias: pro residues; the sequence is QPPQPQPPAV.

The protein belongs to the archaeal DnaG primase family. Forms a ternary complex with MCM helicase and DNA. Component of the archaeal exosome complex. Mg(2+) is required as a cofactor.

The enzyme catalyses ssDNA + n NTP = ssDNA/pppN(pN)n-1 hybrid + (n-1) diphosphate.. Its function is as follows. RNA polymerase that catalyzes the synthesis of short RNA molecules used as primers for DNA polymerase during DNA replication. Also part of the exosome, which is a complex involved in RNA degradation. Acts as a poly(A)-binding protein that enhances the interaction between heteromeric, adenine-rich transcripts and the exosome. The polypeptide is DNA primase DnaG (Hyperthermus butylicus (strain DSM 5456 / JCM 9403 / PLM1-5)).